We begin with the raw amino-acid sequence, 1229 residues long: DNA-directed RNA polymerase subunit beta (1229 aa).

It belongs to the RNA polymerase beta chain family. In terms of assembly, the RNAP catalytic core consists of 2 alpha, 1 beta, 1 beta' and 1 omega subunit. When a sigma factor is associated with the core the holoenzyme is formed, which can initiate transcription.

It carries out the reaction RNA(n) + a ribonucleoside 5'-triphosphate = RNA(n+1) + diphosphate. DNA-dependent RNA polymerase catalyzes the transcription of DNA into RNA using the four ribonucleoside triphosphates as substrates. This is DNA-directed RNA polymerase subunit beta from Roseiflexus sp. (strain RS-1).